Reading from the N-terminus, the 609-residue chain is Aminopeptidase ltah-1.1 (609 aa).

Residues 137 to 139 and 268 to 273 each bind substrate; these read QCQ and PFGGME. His297 contributes to the Zn(2+) binding site. Catalysis depends on Glu298, which acts as the Proton acceptor. Zn(2+)-binding residues include His301 and Glu320. Tyr387 (proton donor) is an active-site residue. 564–566 is a substrate binding site; that stretch reads RMK.

The protein belongs to the peptidase M1 family. It depends on Zn(2+) as a cofactor.

It is found in the cytoplasm. It carries out the reaction Release of N-terminal Arg and Lys from oligopeptides when P1' is not Pro. Also acts on arylamides of Arg and Lys.. In terms of biological role, aminopeptidase which preferentially removes N-terminal Arg and Lys residues from peptides and proteins. This Caenorhabditis elegans protein is Aminopeptidase ltah-1.1.